A 438-amino-acid polypeptide reads, in one-letter code: GTPase Obg (438 aa).

An Obg domain is found at 2 to 160 (NMFVDQIKIE…HYLELELKML (159 aa)). Positions 161-337 (ADVGLIGFPS…LMQLTADLLD (177 aa)) constitute an OBG-type G domain. Residues 167–174 (GFPSVGKS), 192–196 (FTTLT), 214–217 (DMPG), 284–287 (TKMD), and 318–320 (SAV) contribute to the GTP site. Residues S174 and T194 each contribute to the Mg(2+) site. In terms of domain architecture, OCT spans 360-438 (PDKKDEADFT…IEKFVFEFIQ (79 aa)).

Belongs to the TRAFAC class OBG-HflX-like GTPase superfamily. OBG GTPase family. In terms of assembly, monomer. It depends on Mg(2+) as a cofactor.

Its subcellular location is the cytoplasm. In terms of biological role, an essential GTPase which binds GTP, GDP and possibly (p)ppGpp with moderate affinity, with high nucleotide exchange rates and a fairly low GTP hydrolysis rate. Plays a role in control of the cell cycle, stress response, ribosome biogenesis and in those bacteria that undergo differentiation, in morphogenesis control. This chain is GTPase Obg, found in Limosilactobacillus reuteri (strain DSM 20016) (Lactobacillus reuteri).